A 167-amino-acid chain; its full sequence is Leptin (167 aa).

An N-terminal signal peptide occupies residues 1–21; the sequence is MRCGSLCRFLWLWSCLSYIEA. A disulfide bond links C117 and C167.

This sequence belongs to the leptin family.

It is found in the secreted. Functionally, key player in the regulation of energy balance and body weight control. Once released into the circulation, has central and peripheral effects by binding LEPR, found in many tissues, which results in the activation of several major signaling pathways. In the hypothalamus, acts as an appetite-regulating factor that induces a decrease in food intake and an increase in energy consumption by inducing anorexinogenic factors and suppressing orexigenic neuropeptides, also regulates bone mass and secretion of hypothalamo-pituitary-adrenal hormones. In the periphery, increases basal metabolism, influences reproductive function, regulates pancreatic beta-cell function and insulin secretion, is pro-angiogenic for endothelial cell and affects innate and adaptive immunity. In the arcuate nucleus of the hypothalamus, activates by depolarization POMC neurons inducing FOS and SOCS3 expression to release anorexigenic peptides and inhibits by hyperpolarization NPY neurons inducing SOCS3 with a consequent reduction on release of orexigenic peptides. In addition to its known satiety inducing effect, has a modulatory role in nutrient absorption. In the intestine, reduces glucose absorption by enterocytes by activating PKC and leading to a sequential activation of p38, PI3K and ERK signaling pathways which exerts an inhibitory effect on glucose absorption. Acts as a growth factor on certain tissues, through the activation of different signaling pathways increases expression of genes involved in cell cycle regulation such as CCND1, via JAK2-STAT3 pathway, or VEGFA, via MAPK1/3 and PI3K-AKT1 pathways. May also play an apoptotic role via JAK2-STAT3 pathway and up-regulation of BIRC5 expression. Pro-angiogenic, has mitogenic activity on vascular endothelial cells and plays a role in matrix remodeling by regulating the expression of matrix metalloproteinases (MMPs) and tissue inhibitors of metalloproteinases (TIMPs). In innate immunity, modulates the activity and function of neutrophils by increasing chemotaxis and the secretion of oxygen radicals. Increases phagocytosis by macrophages and enhances secretion of pro-inflammatory mediators. Increases cytotoxic ability of NK cells. Plays a pro-inflammatory role, in synergy with IL1B, by inducing NOS2 which promotes the production of IL6, IL8 and Prostaglandin E2, through a signaling pathway that involves JAK2, PI3K, MAP2K1/MEK1 and MAPK14/p38. In adaptive immunity, promotes the switch of memory T-cells towards T helper-1 cell immune responses. Increases CD4(+)CD25(-) T-cell proliferation and reduces autophagy during TCR (T-cell receptor) stimulation, through MTOR signaling pathway activation and BCL2 up-regulation. The polypeptide is Leptin (LEP) (Phoca vitulina (Harbor seal)).